The sequence spans 410 residues: Arginine deiminase (410 aa).

Cys400 acts as the Amidino-cysteine intermediate in catalysis.

This sequence belongs to the arginine deiminase family.

It is found in the cytoplasm. It catalyses the reaction L-arginine + H2O = L-citrulline + NH4(+). It functions in the pathway amino-acid degradation; L-arginine degradation via ADI pathway; carbamoyl phosphate from L-arginine: step 1/2. The protein is Arginine deiminase of Bacillus thuringiensis subsp. konkukian (strain 97-27).